Here is a 207-residue protein sequence, read N- to C-terminus: Small ribosomal subunit protein uS4c (207 aa).

An S4 RNA-binding domain is found at 92–156; the sequence is MRLDNILFRL…YQSIITKRIE (65 aa).

The protein belongs to the universal ribosomal protein uS4 family. As to quaternary structure, part of the 30S ribosomal subunit. Contacts protein S5. The interaction surface between S4 and S5 is involved in control of translational fidelity.

The protein resides in the plastid. Its subcellular location is the chloroplast. Its function is as follows. One of the primary rRNA binding proteins, it binds directly to 16S rRNA where it nucleates assembly of the body of the 30S subunit. With S5 and S12 plays an important role in translational accuracy. The sequence is that of Small ribosomal subunit protein uS4c (rps4) from Equisetum pratense (Meadow horsetail).